Consider the following 232-residue polypeptide: MAKLSKKQKNQAASVDSQKLYGVDEAIALAKQNATSKFDETIEVALNLGVDPRHADQMVRGVVTLPKGTGKDVRVGVFARGAKADEAKAAGAEVVGAEDLLETIQGGTVDFDRCIATPDMMGLVGRLGKILGPKGLMPNPKLGTVTMNVAEAVKAAKGGQVEFRVEKAGIIHSGIGKASFPAEDLRANFDAFVDAIVKAKPTGAKGKYLKKAAVSSTMGPGVKIDVADVAGA.

Belongs to the universal ribosomal protein uL1 family. As to quaternary structure, part of the 50S ribosomal subunit.

Binds directly to 23S rRNA. The L1 stalk is quite mobile in the ribosome, and is involved in E site tRNA release. In terms of biological role, protein L1 is also a translational repressor protein, it controls the translation of the L11 operon by binding to its mRNA. This chain is Large ribosomal subunit protein uL1, found in Rhizorhabdus wittichii (strain DSM 6014 / CCUG 31198 / JCM 15750 / NBRC 105917 / EY 4224 / RW1) (Sphingomonas wittichii).